Consider the following 607-residue polypeptide: Pyruvate decarboxylase 2 (607 aa).

The interval 1–22 is disordered; the sequence is MDTKIGSIDACNPTNHDIGGPP. Substrate-binding residues include aspartate 69 and histidine 156. The interval 434–516 is thiamine pyrophosphate binding; it reads DSWFNCQKLK…FLINNGGYTI (83 aa). Residues aspartate 484, asparagine 511, and glycine 513 each coordinate Mg(2+). Glutamate 517 provides a ligand contact to substrate.

Belongs to the TPP enzyme family. Homotetramer. It depends on a metal cation as a cofactor. Thiamine diphosphate serves as cofactor. In terms of tissue distribution, expressed at low levels in roots, shoots, flowers, siliques and seeds.

It catalyses the reaction a 2-oxocarboxylate + H(+) = an aldehyde + CO2. This is Pyruvate decarboxylase 2 (PDC2) from Arabidopsis thaliana (Mouse-ear cress).